Consider the following 146-residue polypeptide: Hemoglobin subunit beta (146 aa).

At Val1 the chain carries N-acetylvaline. The 145-residue stretch at 2–146 (HLTGEEKSAV…VANALAHKYH (145 aa)) folds into the Globin domain. Thr12 is subject to Phosphothreonine. Phosphoserine is present on Ser44. The residue at position 59 (Lys59) is an N6-acetyllysine. His63 contacts heme b. Lys82 is subject to N6-acetyllysine. His92 provides a ligand contact to heme b. Cys93 carries the S-nitrosocysteine modification. N6-acetyllysine is present on Lys144.

The protein belongs to the globin family. As to quaternary structure, heterotetramer of two alpha chains and two beta chains. Red blood cells.

Involved in oxygen transport from the lung to the various peripheral tissues. This is Hemoglobin subunit beta (HBB) from Mico argentatus (Silvery marmoset).